Here is a 178-residue protein sequence, read N- to C-terminus: Peptide deformylase 2 (178 aa).

The Fe cation site is built by cysteine 101 and histidine 143. Residue glutamate 144 is part of the active site. Histidine 147 lines the Fe cation pocket.

Belongs to the polypeptide deformylase family. It depends on Fe(2+) as a cofactor.

It catalyses the reaction N-terminal N-formyl-L-methionyl-[peptide] + H2O = N-terminal L-methionyl-[peptide] + formate. Its function is as follows. Removes the formyl group from the N-terminal Met of newly synthesized proteins. Requires at least a dipeptide for an efficient rate of reaction. N-terminal L-methionine is a prerequisite for activity but the enzyme has broad specificity at other positions. This chain is Peptide deformylase 2, found in Pseudomonas putida (strain ATCC 47054 / DSM 6125 / CFBP 8728 / NCIMB 11950 / KT2440).